Reading from the N-terminus, the 490-residue chain is Glucose-6-phosphate 1-dehydrogenase (490 aa).

Residues Arg48, 90–91 (DI), and Lys145 contribute to the NADP(+) site. The substrate site is built by His175, Lys179, Glu213, and Asp232. His237 serves as the catalytic Proton acceptor. Residues Lys340 and Lys345 each coordinate substrate.

The protein belongs to the glucose-6-phosphate dehydrogenase family.

It catalyses the reaction D-glucose 6-phosphate + NADP(+) = 6-phospho-D-glucono-1,5-lactone + NADPH + H(+). It participates in carbohydrate degradation; pentose phosphate pathway; D-ribulose 5-phosphate from D-glucose 6-phosphate (oxidative stage): step 1/3. Catalyzes the oxidation of glucose 6-phosphate to 6-phosphogluconolactone. The polypeptide is Glucose-6-phosphate 1-dehydrogenase (Buchnera aphidicola subsp. Baizongia pistaciae (strain Bp)).